The chain runs to 1257 residues: MASCSFTRDQATRRLRGAAAAAAAALAAVVTTPLLSSGTPTALIGTGSSCPGAMWLSTATGSRSDSESEEEDLPVGEEVCKRGYLRKQKHGHRRYFVLKLETADAPARLEYYENARKFRHSVRAAAAAAAAAASGAAIPPLIPPRRVITLYQCFSVSQRADARYRHLIALFTQDEYFAMVAENESEQESWYLLLSRLILESKRRRCGTLGAQPDGEPAALAAAAAAEPPFYKDVWQVIVKPRGLGHRKELSGVFRLCLTDEEVVFVRLNTEVASVVVQLLSIRRCGHSEQYFFLEVGRSTVIGPGELWMQVDDCVVAQNMHELFLEKMRALCADEYRARCRSYSISIGAHLLTLLSARRHLGLVPLEPGGWLRRSRFEQFCHLRAIGDGEDEMLFTRRFVTPSEPVAHSRRGRLHLPRGRRSRRAVSVPASFFRRLAPSPARPRHPAEAPNNGARLSSEVSGSGSGNFGEEGNPQGKEDQEGSGGDYMPMNNWGSGNGRGSGGGQGSNGQGSSSHSSGGNQCSGEGQGSRGGQGSNGQGSGGNQCSRDGQGTAGGHGSGGGQRPGGGHGSGGGQGPGDGHGSGGGKNSGGGKGSGSGKGSDGDGERGKSLKKRSYFGKLTQSKQQQMPPPPPPPPPPPPAGGTGGKGKSGGRFRLYFCVDRGATKECKEAKEVKDAEIPEGAARGPHRARAFDEDEDDPYVPMRPGVATPLVSSSDYMPMAPQNVSASKKRHSRSPFEDSRGYMMMFPRVSPPPAPSPPKAPDTNKEDDSKDNDSESDYMFMAPGAGAIPKNPRNPQGGSSSKSWSSYFSLPNPFRSSPLGQNDNSEYVPMLPGKFLGRGLDKEVSYNWDPKDAASKPSGEGSFSKPGDGGSPSKPSDHEPPKNKAKRPNRLSFITKGYKIKPKPQKPTHEQREADSSSDYVNMDFTKRESNTPAPSTQGLPDSWGIIAEPRQSAFSNYVNVEFGVPFPNPANDLSDLLRAIPRANPLSLDSARWPLPPLPLSATGSNAIEEEGDYIEVIFNSAMTPAMALADSAIRYDAETGRIYVVDPFSECCMDISLSPSRCSEPPPVARLLQEEEQERRRPQSRSQSFFAAARAAVSAFPTDSLERDLSPSSAPAVASAAEPTLALSQVVAAASALAAAPGIGAAAAAAGFDSASARWFQPVANAADAEAVRGAQDVAGGSNPGAHNPSANLARGDNQAGGAAAAAAAPEPPPRSRRVPRPPEREDSDNDDDTHVRMDFARRDNQFDSPKRGR.

Residues 78–199 enclose the PH domain; it reads EVCKRGYLRK…WYLLLSRLIL (122 aa). The IRS-type PTB domain occupies 231 to 335; that stretch reads YKDVWQVIVK…EKMRALCADE (105 aa). 3 disordered regions span residues 406-653, 678-921, and 1179-1257; these read VAHS…GGRF, IPEG…SSDY, and QDVA…KRGR. Basic residues predominate over residues 408–424; it reads HSRRGRLHLPRGRRSRR. The short motif at 487–490 is the YXXM motif 1 element; the sequence is YMPM. Positions 495 to 509 are enriched in gly residues; sequence SGNGRGSGGGQGSNG. A compositionally biased stretch (low complexity) spans 510 to 524; sequence QGSSSHSSGGNQCSG. Gly residues-rich tracts occupy residues 525 to 542 and 551 to 599; these read EGQG…GSGG and GTAG…SGKG. A compositionally biased stretch (pro residues) spans 627-640; sequence MPPPPPPPPPPPPA. The segment covering 641 to 650 has biased composition (gly residues); sequence GGTGGKGKSG. The interval 678–800 is CRK-binding; sequence IPEGAARGPH…KNPRNPQGGS (123 aa). 3 short sequence motifs (YXXM motif) span residues 700 to 703, 717 to 720, and 743 to 746; these read YVPM, YMPM, and YMMM. The span at 750 to 761 shows a compositional bias: pro residues; that stretch reads VSPPPAPSPPKA. Residues 763–774 are compositionally biased toward basic and acidic residues; the sequence is DTNKEDDSKDND. Positions 779–782 match the YXXM motif 5 motif; that stretch reads YMFM. A compositionally biased stretch (low complexity) spans 800 to 810; that stretch reads SSSKSWSSYFS. Residues 815–826 are compositionally biased toward polar residues; sequence FRSSPLGQNDNS. The YXXM motif 6 signature appears at 828–831; it reads YVPM. Positions 840–855 are enriched in basic and acidic residues; the sequence is GLDKEVSYNWDPKDAA. Positions 895–897 are GRB2-binding; sequence ITK. Y921 carries the phosphotyrosine modification. The YXXM motif 7 signature appears at 921–924; that stretch reads YVNM. A compositionally biased stretch (basic and acidic residues) spans 1236-1257; sequence DTHVRMDFARRDNQFDSPKRGR.

In terms of assembly, interacts with SOCS6 in response to stimulation with either insulin or IGF1. Interacts with CRK and CRKL. Interaction with CRK is stronger than with CRKL. Interacts with CRK via the phosphorylated YXXM motifs. Interacts with GRB2 and PIK3R1. Interacts with PLC-gamma, SHC1, PTK6, PPP4C and NISCH. Interacts with ASB4; this interaction promotes IRS4 proteasomal degradation. Post-translationally, phosphorylated on tyrosine residues in response to both insulin and IGF1 signaling. Phosphorylated on Tyr-921 in response to FGF2 signaling. Phosphorylation of Tyr-921 is required for GRB2, phospholipase C-gamma and phosphatidylinositol 3-kinase interaction. Ubiquitinated in a ASB4-dependent manner, leading to proteasomal degradation. As to expression, expressed in myoblasts. Expressed in liver and hepatocellular carcinoma.

It localises to the cell membrane. Acts as an interface between multiple growth factor receptors possessing tyrosine kinase activity, such as insulin receptor, IGF1R and FGFR1, and a complex network of intracellular signaling molecules containing SH2 domains. Involved in the IGF1R mitogenic signaling pathway. Promotes the AKT1 signaling pathway and BAD phosphorylation during insulin stimulation without activation of RPS6KB1 or the inhibition of apoptosis. Interaction with GRB2 enhances insulin-stimulated mitogen-activated protein kinase activity. May be involved in nonreceptor tyrosine kinase signaling in myoblasts. Plays a pivotal role in the proliferation/differentiation of hepatoblastoma cell through EPHB2 activation upon IGF1 stimulation. May play a role in the signal transduction in response to insulin and to a lesser extent in response to IL4 and GH on mitogenesis. Plays a role in growth, reproduction and glucose homeostasis. May act as negative regulators of the IGF1 signaling pathway by suppressing the function of IRS1 and IRS2. The chain is Insulin receptor substrate 4 (IRS4) from Homo sapiens (Human).